A 403-amino-acid chain; its full sequence is Argininosuccinate synthase (403 aa).

10–18 contacts ATP; that stretch reads AYSGGLDTS. L-citrulline contacts are provided by tyrosine 88 and serine 93. Glycine 118 serves as a coordination point for ATP. L-aspartate is bound by residues threonine 120, asparagine 124, and aspartate 125. Asparagine 124 lines the L-citrulline pocket. Arginine 128, serine 177, serine 186, glutamate 263, and tyrosine 275 together coordinate L-citrulline.

Belongs to the argininosuccinate synthase family. Type 1 subfamily. Homotetramer.

The protein localises to the cytoplasm. The enzyme catalyses L-citrulline + L-aspartate + ATP = 2-(N(omega)-L-arginino)succinate + AMP + diphosphate + H(+). Its pathway is amino-acid biosynthesis; L-arginine biosynthesis; L-arginine from L-ornithine and carbamoyl phosphate: step 2/3. The chain is Argininosuccinate synthase from Clostridium perfringens (strain ATCC 13124 / DSM 756 / JCM 1290 / NCIMB 6125 / NCTC 8237 / Type A).